We begin with the raw amino-acid sequence, 104 residues long: ATP-dependent Clp protease adapter protein ClpS (104 aa).

The protein belongs to the ClpS family. Binds to the N-terminal domain of the chaperone ClpA.

Functionally, involved in the modulation of the specificity of the ClpAP-mediated ATP-dependent protein degradation. The sequence is that of ATP-dependent Clp protease adapter protein ClpS from Desulforapulum autotrophicum (strain ATCC 43914 / DSM 3382 / VKM B-1955 / HRM2) (Desulfobacterium autotrophicum).